Consider the following 712-residue polypeptide: Polyribonucleotide nucleotidyltransferase (712 aa).

Asp-487 and Asp-493 together coordinate Mg(2+). One can recognise a KH domain in the interval Pro-554–Ile-613. In terms of domain architecture, S1 motif spans Gly-623–Lys-691.

This sequence belongs to the polyribonucleotide nucleotidyltransferase family. The cofactor is Mg(2+).

Its subcellular location is the cytoplasm. The enzyme catalyses RNA(n+1) + phosphate = RNA(n) + a ribonucleoside 5'-diphosphate. Its function is as follows. Involved in mRNA degradation. Catalyzes the phosphorolysis of single-stranded polyribonucleotides processively in the 3'- to 5'-direction. This chain is Polyribonucleotide nucleotidyltransferase, found in Geobacillus sp. (strain WCH70).